We begin with the raw amino-acid sequence, 479 residues long: RAC-gamma serine/threonine-protein kinase (479 aa).

Ser-2 carries the N-acetylserine modification. A PH domain is found at 5 to 107; that stretch reads TIVKEGWVQK…WTEAIQAVAD (103 aa). A disulfide bridge links Cys-59 with Cys-76. The Protein kinase domain maps to 148–405; it reads FDYLKLLGKG…AKEIMRHSFF (258 aa). ATP-binding positions include 154–162 and Lys-177; that span reads LGKGTFGKV. Residue Asp-271 is the Proton acceptor of the active site. An intrachain disulfide couples Cys-293 to Cys-307. A glycan (O-linked (GlcNAc) threonine) is linked at Thr-302. Thr-305 is modified (phosphothreonine; by PDPK1). An O-linked (GlcNAc) threonine glycan is attached at Thr-309. Positions 406 to 479 constitute an AGC-kinase C-terminal domain; it reads SGVNWQDVYD…QFSYSASGRE (74 aa). Residues 445–479 are disordered; that stretch reads TITPPEKYDDDGMDGMDNERRPHFPQFSYSASGRE. At Thr-447 the chain carries Phosphothreonine. Residue Ser-472 is modified to Phosphoserine; by PKC/PRKCZ. Ser-472 carries O-linked (GlcNAc) serine; alternate glycosylation.

It belongs to the protein kinase superfamily. AGC Ser/Thr protein kinase family. RAC subfamily. In terms of assembly, interacts (via PH domain) with TCL1A; this enhances AKT3 phosphorylation and activation. Interacts with TRAF6. Interacts with KCTD20. Interacts with BTBD10. Post-translationally, phosphorylation on Thr-305 and Ser-472 is required for full activity. Phosphorylation of the activation loop at Thr-305 by PDPK1/PDK1 is a prerequisite for full activation. Phosphorylation at Ser-472 by mTORC2 in response to growth factors plays a key role in AKT1 activation by facilitating subsequent phosphorylation of the activation loop by PDPK1/PDK1. In terms of processing, ubiquitinated. When fully phosphorylated and translocated into the nucleus, undergoes 'Lys-48'-polyubiquitination catalyzed by TTC3, leading to its degradation by the proteasome. O-GlcNAcylation at Thr-302 and Thr-309 inhibits activating phosphorylation at Thr-305 via disrupting the interaction between AKT and PDPK1/PDK1. As to expression, isoform 1 is expressed in prostate, testis, uterus and mammary gland and isoform 2 is expressed in prostate, testis and mammary gland.

The protein resides in the nucleus. It localises to the cytoplasm. It is found in the membrane. The catalysed reaction is L-seryl-[protein] + ATP = O-phospho-L-seryl-[protein] + ADP + H(+). The enzyme catalyses L-threonyl-[protein] + ATP = O-phospho-L-threonyl-[protein] + ADP + H(+). With respect to regulation, two specific sites, one in the kinase domain (Thr-305) and the other in the C-terminal regulatory region (Ser-472), need to be phosphorylated for its full activation. IGF-1 leads to the activation of AKT3, which may play a role in regulating cell survival. In terms of biological role, AKT3 is one of 3 closely related serine/threonine-protein kinases (AKT1, AKT2 and AKT3) called the AKT kinase, and which regulate many processes including metabolism, proliferation, cell survival, growth and angiogenesis. This is mediated through serine and/or threonine phosphorylation of a range of downstream substrates. Over 100 substrate candidates have been reported so far, but for most of them, no isoform specificity has been reported. AKT3 is the least studied AKT isoform. It plays an important role in brain development and is crucial for the viability of malignant glioma cells. AKT3 isoform may also be the key molecule in up-regulation and down-regulation of MMP13 via IL13. Required for the coordination of mitochondrial biogenesis with growth factor-induced increases in cellular energy demands. Down-regulation by RNA interference reduces the expression of the phosphorylated form of BAD, resulting in the induction of caspase-dependent apoptosis. The sequence is that of RAC-gamma serine/threonine-protein kinase (Akt3) from Mus musculus (Mouse).